A 122-amino-acid chain; its full sequence is Insulin-like growth factor 1 (122 aa).

The b stretch occupies residues Gly-49–Thr-77. Disulfide bonds link Cys-54/Cys-96, Cys-66/Cys-109, and Cys-95/Cys-100. The tract at residues Gly-78 to Thr-89 is c. Residues Gly-90 to Ala-110 form an a region. A d region spans residues Pro-111 to Ala-118. A propeptide spans Arg-119–Arg-122 (e peptide).

It belongs to the insulin family. As to quaternary structure, forms a ternary complex with IGFR1 and ITGAV:ITGB3. Forms a ternary complex with IGFR1 and ITGA6:ITGB4. Forms a ternary complex with IGFBP3 and ALS.

It is found in the secreted. Its function is as follows. The insulin-like growth factors, isolated from plasma, are structurally and functionally related to insulin but have a much higher growth-promoting activity. May be a physiological regulator of [1-14C]-2-deoxy-D-glucose (2DG) transport and glycogen synthesis in osteoblasts. Stimulates glucose transport in bone-derived osteoblastic (PyMS) cells and is effective at much lower concentrations than insulin, not only regarding glycogen and DNA synthesis but also with regard to enhancing glucose uptake. May play a role in synapse maturation. Ca(2+)-dependent exocytosis of IGF1 is required for sensory perception of smell in the olfactory bulb. Acts as a ligand for IGF1R. Binds to the alpha subunit of IGF1R, leading to the activation of the intrinsic tyrosine kinase activity which autophosphorylates tyrosine residues in the beta subunit thus initiating a cascade of down-stream signaling events leading to activation of the PI3K-AKT/PKB and the Ras-MAPK pathways. Binds to integrins ITGAV:ITGB3 and ITGA6:ITGB4. Its binding to integrins and subsequent ternary complex formation with integrins and IGFR1 are essential for IGF1 signaling. Induces the phosphorylation and activation of IGFR1, MAPK3/ERK1, MAPK1/ERK2 and AKT1. As part of the MAPK/ERK signaling pathway, acts as a negative regulator of apoptosis in cardiomyocytes via promotion of STUB1/CHIP-mediated ubiquitination and degradation of ICER-type isoforms of CREM. This chain is Insulin-like growth factor 1, found in Equus caballus (Horse).